We begin with the raw amino-acid sequence, 277 residues long: Phosphatidylglycerol--prolipoprotein diacylglyceryl transferase (277 aa).

4 consecutive transmembrane segments (helical) span residues 18–38 (ISVK…LLLA), 51–71 (IIVD…RIYY), 89–109 (IWHG…TAII), and 116–136 (ISFW…QAIG). Residue arginine 137 coordinates a 1,2-diacyl-sn-glycero-3-phospho-(1'-sn-glycerol). 3 consecutive transmembrane segments (helical) span residues 177–197 (QPTF…LLII), 205–225 (GELF…IEGM), and 235–255 (FRVS…IIIY).

This sequence belongs to the Lgt family.

The protein localises to the cell membrane. It carries out the reaction L-cysteinyl-[prolipoprotein] + a 1,2-diacyl-sn-glycero-3-phospho-(1'-sn-glycerol) = an S-1,2-diacyl-sn-glyceryl-L-cysteinyl-[prolipoprotein] + sn-glycerol 1-phosphate + H(+). Its pathway is protein modification; lipoprotein biosynthesis (diacylglyceryl transfer). In terms of biological role, catalyzes the transfer of the diacylglyceryl group from phosphatidylglycerol to the sulfhydryl group of the N-terminal cysteine of a prolipoprotein, the first step in the formation of mature lipoproteins. This Listeria monocytogenes serotype 4a (strain HCC23) protein is Phosphatidylglycerol--prolipoprotein diacylglyceryl transferase.